The sequence spans 144 residues: Large ribosomal subunit protein uL11 (144 aa).

It belongs to the universal ribosomal protein uL11 family. In terms of assembly, part of the ribosomal stalk of the 50S ribosomal subunit. Interacts with L10 and the large rRNA to form the base of the stalk. L10 forms an elongated spine to which L12 dimers bind in a sequential fashion forming a multimeric L10(L12)X complex. In terms of processing, one or more lysine residues are methylated.

Its function is as follows. Forms part of the ribosomal stalk which helps the ribosome interact with GTP-bound translation factors. The sequence is that of Large ribosomal subunit protein uL11 from Frankia alni (strain DSM 45986 / CECT 9034 / ACN14a).